The sequence spans 423 residues: Zinc finger and BTB domain-containing protein 6 (423 aa).

One can recognise a BTB domain in the interval 33–97 (CDVSIYINDT…CYTGALEVKR (65 aa)). A Phosphoserine modification is found at S201. 4 consecutive C2H2-type zinc fingers follow at residues 300–322 (HQCP…LKMH), 325–347 (FLCL…IRGH), 353–375 (FQCT…LNIH), and 381–404 (YKCH…TSVH).

It is found in the nucleus. May be involved in transcriptional regulation. In Mus musculus (Mouse), this protein is Zinc finger and BTB domain-containing protein 6 (Zbtb6).